A 139-amino-acid chain; its full sequence is MGCNSLSMIKVRLQNLFDNDEVALLKITCYTDKLILLTNALAKAAIHTIKLNGIVFIHVITSSEVCPDNNIVVKSNFTTMPILQNGGYIWELIELTHCSQLNGLMDDNCEIKFSKRLSDSVMTNYMNQISDLLGLDLNS.

Residues 136–139 carry the DLNP; interaction with MAP1B motif; sequence DLNS.

The protein belongs to the pneumovirus non-structural protein 1 family. Monomer. Homomultimer. Heteromultimer with NS2. Interacts with the matrix protein M. Interacts with host ELOC and CUL2; this interaction allows NS1 to form an active E3 ligase with ELOC and CUL2. Interacts with host IRF3; this interaction leads to the disrupted association of IRF3 with CREBBP and thus reduced binding of IRF3 to the IFN-beta promoter. Interacts with host MAVS; this interaction prevents MAVS binding to RIGI and inhibits signaling pathway leading to interferon production. Interacts with host MAP1B/microtubule-associated protein 1B. Interacts with host TRIM25 (via SPRY domain); this interaction suppresses RIGI ubiquitination and results in decreased interaction between RIGI and MAVS.

Its subcellular location is the host cytoplasm. The protein resides in the host mitochondrion. It localises to the host nucleus. Functionally, plays a major role in antagonizing the type I IFN-mediated antiviral response by degrading or inhibiting multiple cellular factors required for either IFN induction or response pathways. Acts cooperatively with NS2 to repress activation and nuclear translocation of host IFN-regulatory factor IRF3. Also disrupts the association of IRF3 with CREBBP. Interacts with host mitochondrial-associated membrane (MAM) MAVS and prevents the interaction with RIGI. Interacts with TRIM25 to suppress TRIM25-mediated RIGI ubiquitination and thereby RIGI-MAVS interaction. Together with NS2, participates in the proteasomal degradation of host STAT2, IRF3, IRF7, TBK1 and RIGI through a NS-degradasome involving CUL2 and Elongin-C. The degradasome requires an intact mitochondrial MAVS. Decreases the levels of host TRAF3 and IKBKE/IKK-epsilon. As functions other than disruptions of the type I IFN-mediated antiviral signaling pathways, induces host SOCS1 and SOCS3 expression. Suppresses premature apoptosis by an NF-kappa-B-dependent, interferon-independent mechanism and thus facilitates virus growth. Additionally, NS1 may serve some inhibitory role in viral transcription and RNA replication. Suppresses proliferation and activation of host CD103+ CD8+ cytotoxic T-lymphocytes and Th17 helper T-lymphocytes. This chain is Non-structural protein 1 (1C), found in Homo sapiens (Human).